We begin with the raw amino-acid sequence, 245 residues long: Orotidine 5'-phosphate decarboxylase (245 aa).

Substrate is bound by residues aspartate 22, lysine 44, 71–80 (DLKFHDIPNT), threonine 131, arginine 192, glutamine 201, glycine 221, and arginine 222. The active-site Proton donor is lysine 73.

This sequence belongs to the OMP decarboxylase family. Type 1 subfamily. As to quaternary structure, homodimer.

The catalysed reaction is orotidine 5'-phosphate + H(+) = UMP + CO2. It functions in the pathway pyrimidine metabolism; UMP biosynthesis via de novo pathway; UMP from orotate: step 2/2. Its function is as follows. Catalyzes the decarboxylation of orotidine 5'-monophosphate (OMP) to uridine 5'-monophosphate (UMP). The sequence is that of Orotidine 5'-phosphate decarboxylase from Yersinia pseudotuberculosis serotype O:1b (strain IP 31758).